Consider the following 272-residue polypeptide: Exosome complex component Rrp42 (272 aa).

Belongs to the RNase PH family. Rrp42 subfamily. As to quaternary structure, component of the archaeal exosome complex. Forms a hexameric ring-like arrangement composed of 3 Rrp41-Rrp42 heterodimers. The hexameric ring associates with a trimer of Rrp4 and/or Csl4 subunits.

Its subcellular location is the cytoplasm. Non-catalytic component of the exosome, which is a complex involved in RNA degradation. Contributes to the structuring of the Rrp41 active site. The protein is Exosome complex component Rrp42 of Thermococcus onnurineus (strain NA1).